Consider the following 142-residue polypeptide: Large ribosomal subunit protein uL11 (142 aa).

The protein belongs to the universal ribosomal protein uL11 family. Part of the ribosomal stalk of the 50S ribosomal subunit. Interacts with L10 and the large rRNA to form the base of the stalk. L10 forms an elongated spine to which L12 dimers bind in a sequential fashion forming a multimeric L10(L12)X complex. Post-translationally, one or more lysine residues are methylated.

Forms part of the ribosomal stalk which helps the ribosome interact with GTP-bound translation factors. This is Large ribosomal subunit protein uL11 from Enterobacter sp. (strain 638).